A 190-amino-acid chain; its full sequence is FPAMPLSSLFANAVLRAQHLHQLAADTYKEFERAYIPEGQRYSIQNAQAAFCFSETIPAPTGKDEAQQRSDVELLRFSLVLIQSWLGPLQFLSRVFTNSLVFGTSDRVYEKLKDLEEGIQALMRELEDGSPRAGQILKQTYDKFDTNLRSDDALLKNYGLLSCFKKDLHKAETYLRVMKCRRFVESSCAF.

His-19 provides a ligand contact to Zn(2+). Cys-52 and Cys-163 are oxidised to a cystine. Ser-105 is modified (phosphoserine). Glu-172 is a Zn(2+) binding site. A disulfide bridge connects residues Cys-180 and Cys-188.

This sequence belongs to the somatotropin/prolactin family.

The protein resides in the secreted. Functionally, plays an important role in growth control. Its major role in stimulating body growth is to stimulate the liver and other tissues to secrete IGF1. It stimulates both the differentiation and proliferation of myoblasts. It also stimulates amino acid uptake and protein synthesis in muscle and other tissues. This chain is Somatotropin (GH1), found in Vulpes vulpes (Red fox).